Reading from the N-terminus, the 77-residue chain is Thioredoxin (77 aa).

Catalysis depends on nucleophile residues Cys-11 and Cys-14. An intrachain disulfide couples Cys-11 to Cys-14.

The protein belongs to the glutaredoxin family.

Its function is as follows. Does not function as a glutathione-disulfide oxidoreductase in the presence of glutathione and glutathione reductase. Has low thioredoxin activity in vitro. This chain is Thioredoxin, found in Methanothermobacter thermautotrophicus (strain ATCC 29096 / DSM 1053 / JCM 10044 / NBRC 100330 / Delta H) (Methanobacterium thermoautotrophicum).